The following is a 170-amino-acid chain: Cathelicidin antimicrobial peptide (170 aa).

An N-terminal signal peptide occupies residues 1–30 (MKTQRHGPSLGRWSLVLLLLGLVMPLAIVA). A propeptide spans 31–131 (QVLSYQEAVL…DISCDKDNRR (101 aa)) (cathelin-like domain (CLD)). Cystine bridges form between Cys-86–Cys-97 and Cys-108–Cys-125. Residues 150–162 (LKKIGQKIKDFLG) form an active core region.

Belongs to the cathelicidin family. Monomer, homodimer or homotrimer (in vitro). Oligomerizes as tetra- or hexamer in solution (in vitro). Post-translationally, proteolytically cleaved by proteinase PRTN3 into antibacterial peptide LL-37. Proteolytically cleaved by cathepsin CTSG and neutrophil elastase ELANE. Resistant to proteolytic degradation in solution, and when bound to both zwitterionic (mimicking mammalian membranes) and negatively charged membranes (mimicking bacterial membranes). In terms of processing, after secretion onto the skin surface, the CAMP gene product is processed by a serine protease-dependent mechanism into multiple novel antimicrobial peptides distinct from and shorter than cathelicidin LL-37. These peptides show enhanced antimicrobial action, acquiring the ability to kill skin pathogens such as S.aureus, E.coli and C.albicans. These peptides have lost the ability to stimulate CXCL8/IL8 release from keratinocytes. The peptides act synergistically, killing bacteria at lower concentrations when present together, and maintain activity at increased salt condition.

Its subcellular location is the secreted. It is found in the vesicle. Functionally, antimicrobial protein that is an integral component of the innate immune system. Binds to bacterial lipopolysaccharides (LPS). Acts via neutrophil N-formyl peptide receptors to enhance the release of CXCL2. Postsecretory processing generates multiple cathelicidin antimicrobial peptides with various lengths which act as a topical antimicrobial defense in sweat on skin. The unprocessed precursor form, cathelicidin antimicrobial peptide, inhibits the growth of Gram-negative E.coli and E.aerogenes with efficiencies comparable to that of the mature peptide LL-37 (in vitro). Antimicrobial peptide that is an integral component of the innate immune system. Binds to bacterial lipopolysaccharides (LPS). Causes membrane permeabilization by forming transmembrane pores (in vitro). Causes lysis of E.coli. Exhibits antimicrobial activity against Gram-negative bacteria such as P.aeruginosa, S.typhimurium, E.aerogenes, E.coli and P.syringae, Gram-positive bacteria such as L.monocytogenes, S.epidermidis, S.pyogenes and S.aureus, as well as vancomycin-resistant enterococci (in vitro). Exhibits antimicrobial activity against methicillin-resistant S.aureus, P.mirabilis, and C.albicans in low-salt media, but not in media containing 100 mM NaCl (in vitro). Forms chiral supramolecular assemblies with quinolone signal (PQS) molecules of P.aeruginosa, which may lead to interference of bacterial quorum signaling and perturbance of bacterial biofilm formation. May form supramolecular fiber-like assemblies on bacterial membranes. Induces cytokine and chemokine producation as well as TNF/TNFA and CSF2/GMCSF production in normal human keratinocytes. Exhibits hemolytic activity against red blood cells. Its function is as follows. Exhibits antimicrobial activity against E.coli and B.megaterium (in vitro). In Trachypithecus obscurus (Dusky leaf-monkey), this protein is Cathelicidin antimicrobial peptide.